We begin with the raw amino-acid sequence, 364 residues long: Developmentally-regulated GTP-binding protein 2 (364 aa).

Lysine 21 bears the (3S)-3-hydroxylysine mark. The OBG-type G domain occupies 63–288 (ARVALIGFPS…LLEMLWEYLA (226 aa)). GTP-binding positions include 69–76 (GFPSVGKS), 94–98 (FTTLT), 115–118 (DLPG), 246–249 (NKID), and 269–271 (SCG). 2 residues coordinate Mg(2+): serine 76 and threonine 96. The region spanning 288–363 (ALTCIYTKKR…EHEDVIQIVK (76 aa)) is the TGS domain.

Belongs to the TRAFAC class OBG-HflX-like GTPase superfamily. OBG GTPase family. Interacts with RWDD1; this interaction confers protection to polyubiquitination and proteolytic degradation. Interacts with JMJD7; this interaction is direct. It depends on Mg(2+) as a cofactor. In terms of processing, polyubiquitinated. Post-translationally, hydroxylated (with S stereochemistry) at C-3 of Lys-21 by JMJD7. As to expression, fairly high levels in liver, heart, kidney, and brain. Very low levels in lung, spleen, testis and skeletal muscle.

Its subcellular location is the nucleus. The protein localises to the cytoplasm. The enzyme catalyses GTP + H2O = GDP + phosphate + H(+). Functionally, catalyzes the conversion of GTP to GDP through hydrolysis of the gamma-phosphate bond in GTP. When hydroxylated at C-3 of 'Lys-21' by JMJD7, may bind to RNA and play a role in translation. This chain is Developmentally-regulated GTP-binding protein 2 (Drg2), found in Mus musculus (Mouse).